The primary structure comprises 125 residues: Small ribosomal subunit protein uS12 (125 aa).

D89 bears the 3-methylthioaspartic acid mark. The tract at residues 105-125 is disordered; the sequence is QGVKDRKQSRSKYGAKKPKAK. The segment covering 113-125 has biased composition (basic residues); it reads SRSKYGAKKPKAK.

Belongs to the universal ribosomal protein uS12 family. Part of the 30S ribosomal subunit. Contacts proteins S8 and S17. May interact with IF1 in the 30S initiation complex.

In terms of biological role, with S4 and S5 plays an important role in translational accuracy. Its function is as follows. Interacts with and stabilizes bases of the 16S rRNA that are involved in tRNA selection in the A site and with the mRNA backbone. Located at the interface of the 30S and 50S subunits, it traverses the body of the 30S subunit contacting proteins on the other side and probably holding the rRNA structure together. The combined cluster of proteins S8, S12 and S17 appears to hold together the shoulder and platform of the 30S subunit. This chain is Small ribosomal subunit protein uS12, found in Delftia acidovorans (strain DSM 14801 / SPH-1).